The sequence spans 311 residues: Formimidoylglutamase (311 aa).

H130, D155, H157, D159, C242, and D244 together coordinate Mn(2+).

It belongs to the arginase family. Requires Mn(2+) as cofactor.

The enzyme catalyses N-formimidoyl-L-glutamate + H2O = formamide + L-glutamate. The protein operates within amino-acid degradation; L-histidine degradation into L-glutamate; L-glutamate from N-formimidoyl-L-glutamate (hydrolase route): step 1/1. Its function is as follows. Catalyzes the conversion of N-formimidoyl-L-glutamate to L-glutamate and formamide. This is Formimidoylglutamase from Staphylococcus aureus (strain MRSA252).